Reading from the N-terminus, the 195-residue chain is Small ribosomal subunit protein uS4 (195 aa).

The S4 RNA-binding domain maps to 88–150; it reads RRLENVVYRL…SKNVELIKLA (63 aa).

This sequence belongs to the universal ribosomal protein uS4 family. Part of the 30S ribosomal subunit. Contacts protein S5. The interaction surface between S4 and S5 is involved in control of translational fidelity.

One of the primary rRNA binding proteins, it binds directly to 16S rRNA where it nucleates assembly of the body of the 30S subunit. Its function is as follows. With S5 and S12 plays an important role in translational accuracy. The protein is Small ribosomal subunit protein uS4 of Fusobacterium nucleatum subsp. nucleatum (strain ATCC 25586 / DSM 15643 / BCRC 10681 / CIP 101130 / JCM 8532 / KCTC 2640 / LMG 13131 / VPI 4355).